The primary structure comprises 214 residues: Glycerol-3-phosphate acyltransferase (214 aa).

The next 5 membrane-spanning stretches (helical) occupy residues 8–28 (LILA…QIFF), 70–90 (LLPL…LIAV), 111–131 (AGVV…IFIV), 144–164 (IVVA…GIIL), and 165–185 (PSYD…ILIR).

The protein belongs to the PlsY family. As to quaternary structure, probably interacts with PlsX.

It localises to the cell membrane. It catalyses the reaction an acyl phosphate + sn-glycerol 3-phosphate = a 1-acyl-sn-glycero-3-phosphate + phosphate. The protein operates within lipid metabolism; phospholipid metabolism. Its function is as follows. Catalyzes the transfer of an acyl group from acyl-phosphate (acyl-PO(4)) to glycerol-3-phosphate (G3P) to form lysophosphatidic acid (LPA). This enzyme utilizes acyl-phosphate as fatty acyl donor, but not acyl-CoA or acyl-ACP. The protein is Glycerol-3-phosphate acyltransferase of Streptococcus gordonii (strain Challis / ATCC 35105 / BCRC 15272 / CH1 / DL1 / V288).